We begin with the raw amino-acid sequence, 129 residues long: uncharacterized protein (129 aa).

Residues 8-24 (YLILFITIIAICSLFRI) form a helical membrane-spanning segment.

The protein localises to the membrane. This is an uncharacterized protein from Rickettsia prowazekii (strain Madrid E).